The chain runs to 262 residues: Ninja-family protein 2 (262 aa).

The interval 49–70 (RNSLACNTSKEAAGQSPKEMNA) is disordered.

The protein belongs to the Ninja family.

The protein localises to the nucleus. This Zea mays (Maize) protein is Ninja-family protein 2.